A 452-amino-acid polypeptide reads, in one-letter code: Probable 1,4-beta-D-glucan cellobiohydrolase A (452 aa).

The first 17 residues, 1–17, serve as a signal peptide directing secretion; sequence MHQRALLFSALLTAVRA. Residue asparagine 62 is glycosylated (N-linked (GlcNAc...) asparagine). Glutamate 227 serves as the catalytic Nucleophile. The Proton donor role is filled by glutamate 232. Asparagine 285, asparagine 335, asparagine 402, and asparagine 445 each carry an N-linked (GlcNAc...) asparagine glycan.

It belongs to the glycosyl hydrolase 7 (cellulase C) family.

The protein localises to the secreted. The enzyme catalyses Hydrolysis of (1-&gt;4)-beta-D-glucosidic linkages in cellulose and cellotetraose, releasing cellobiose from the non-reducing ends of the chains.. Functionally, the biological conversion of cellulose to glucose generally requires three types of hydrolytic enzymes: (1) Endoglucanases which cut internal beta-1,4-glucosidic bonds; (2) Exocellobiohydrolases that cut the disaccharide cellobiose from the non-reducing end of the cellulose polymer chain; (3) Beta-1,4-glucosidases which hydrolyze the cellobiose and other short cello-oligosaccharides to glucose. This is Probable 1,4-beta-D-glucan cellobiohydrolase A (cbhA) from Aspergillus niger (strain ATCC MYA-4892 / CBS 513.88 / FGSC A1513).